Consider the following 420-residue polypeptide: MNILNNNLYEMDKEIYEIIKNEKIRQNNVIELIASENFVSSAVLEAQGSILTNKYAEGYPSKRFYNGCDEVDKAEVLAIERIKKLFNCKYANVQPHSGSQANQTVYLALLQPCDTILGMSLDSGGHLTHGAAPNISGKWFNTVSYHVDQETYLIDYDEVERLAVLHNPKLLIAGFSAYPRKIDFAKFRKIADKVGAYLMADIAHIAGLVATGEHQSPIPYAHVVTSTTHKTLRGPRGGLILSDDEEIGKKINSALFPGLQGGPLMHIIAAKAVAFLENLQPEYKNYIKQVISNAKALAISLQERGYDILTGGTDNHIVLVDLRKDGITGKCAANSLDRAGITCNKNAIPFDTTSPFITSGIRFGTPACTTKGFKEKDFVLIGHMVAEILDGLKHNEDNSKTEQKVLSEVKKLMKLFPFYD.

(6S)-5,6,7,8-tetrahydrofolate contacts are provided by residues Leu-121 and 125–127 (GHL). Residue Lys-230 is modified to N6-(pyridoxal phosphate)lysine. Residues Glu-246 and 354-356 (SPF) contribute to the (6S)-5,6,7,8-tetrahydrofolate site.

Belongs to the SHMT family. In terms of assembly, homodimer. Pyridoxal 5'-phosphate is required as a cofactor.

The protein resides in the cytoplasm. It catalyses the reaction (6R)-5,10-methylene-5,6,7,8-tetrahydrofolate + glycine + H2O = (6S)-5,6,7,8-tetrahydrofolate + L-serine. It participates in one-carbon metabolism; tetrahydrofolate interconversion. It functions in the pathway amino-acid biosynthesis; glycine biosynthesis; glycine from L-serine: step 1/1. Functionally, catalyzes the reversible interconversion of serine and glycine with tetrahydrofolate (THF) serving as the one-carbon carrier. This reaction serves as the major source of one-carbon groups required for the biosynthesis of purines, thymidylate, methionine, and other important biomolecules. Also exhibits THF-independent aldolase activity toward beta-hydroxyamino acids, producing glycine and aldehydes, via a retro-aldol mechanism. The protein is Serine hydroxymethyltransferase of Rickettsia prowazekii (strain Madrid E).